The following is a 163-amino-acid chain: Nucleotide-binding protein GTNG_0630 (163 aa).

The protein belongs to the YajQ family.

Functionally, nucleotide-binding protein. The polypeptide is Nucleotide-binding protein GTNG_0630 (Geobacillus thermodenitrificans (strain NG80-2)).